The following is a 140-amino-acid chain: MGRMAHRSHTGTGPSQRQLRVGELIRRTLADVLNRGEIHDPDLNRMSITVGEVRCSPDLKVATVHVMPLGGKDVEEAIALLSKHRGELRHHITRQMTLKYAPDLRFRPDETFDRLDETRRLFSDETVQRDIRGSGDGDED.

It belongs to the RbfA family. In terms of assembly, monomer. Binds 30S ribosomal subunits, but not 50S ribosomal subunits or 70S ribosomes.

It is found in the cytoplasm. In terms of biological role, one of several proteins that assist in the late maturation steps of the functional core of the 30S ribosomal subunit. Associates with free 30S ribosomal subunits (but not with 30S subunits that are part of 70S ribosomes or polysomes). Required for efficient processing of 16S rRNA. May interact with the 5'-terminal helix region of 16S rRNA. In Cereibacter sphaeroides (strain ATCC 17025 / ATH 2.4.3) (Rhodobacter sphaeroides), this protein is Ribosome-binding factor A.